A 468-amino-acid polypeptide reads, in one-letter code: Argininosuccinate synthase (468 aa).

Residues 10–18 and Ala37 each bind ATP; that span reads AYSGGLDTS. L-citrulline-binding residues include Tyr90 and Ser95. Gly120 lines the ATP pocket. The L-aspartate site is built by Thr122, Asn126, and Asp127. An L-citrulline-binding site is contributed by Asn126. L-citrulline contacts are provided by Arg130, Ser182, Ser191, Glu267, and Tyr279. Residues 445-457 show a composition bias toward low complexity; sequence PVAAKATAKPVKA. The segment at 445 to 468 is disordered; that stretch reads PVAAKATAKPVKAPVKKPIAKKKG. Over residues 458-468 the composition is skewed to basic residues; it reads PVKKPIAKKKG.

This sequence belongs to the argininosuccinate synthase family. Type 1 subfamily. As to quaternary structure, homotetramer.

It localises to the cytoplasm. The catalysed reaction is L-citrulline + L-aspartate + ATP = 2-(N(omega)-L-arginino)succinate + AMP + diphosphate + H(+). The protein operates within amino-acid biosynthesis; L-arginine biosynthesis; L-arginine from L-ornithine and carbamoyl phosphate: step 2/3. This Dechloromonas aromatica (strain RCB) protein is Argininosuccinate synthase.